We begin with the raw amino-acid sequence, 107 residues long: Endonuclease ALBA3 (107 aa).

An N6-acetyllysine mark is found at K23 and K32.

This sequence belongs to the histone-like Alba family. As to quaternary structure, homodimer. Interacts (acetylated and unacetylated) with Sir2A. The cofactor is a divalent metal cation. Acetylated. Exists in both acetylated and unacetylated forms but predominantly in an acetylated form. Deacetylated by Sir2A.

It localises to the nucleus. It is found in the chromosome. Its subcellular location is the telomere. The protein resides in the cytoplasm. With respect to regulation, mild acetylation lowers protein interaction with DNA and high acetylation abolishes DNA-binding activity. DNA binding and endonuclease activity is modulated via deacetylation of Lys-23 by Sir2A. Inhibited in the presence of EDTA and EGTA. Its function is as follows. Possesses DNA-binding and endonuclease activities. Binds DNA cooperatively in sequence-independent manner at the DNA minor groove. Exhibits apurinic/apyrimidinic site-driven endonuclease activity. Binds RNA; shows high affinity for poly(A) and a lower affinity for poly(U) templates. In vitro, prevents transcription after DNA binding. Associates with the telomeric region, the subtelomeric TARE6 repeat sequence and the var gene promoters. This is Endonuclease ALBA3 from Plasmodium falciparum (isolate 3D7).